The sequence spans 130 residues: Small ribosomal subunit protein uS9 (130 aa).

Positions 109–130 are disordered; that stretch reads RAKERKKYGLKAARRAPQFSKR. The segment covering 111–130 has biased composition (basic residues); the sequence is KERKKYGLKAARRAPQFSKR.

Belongs to the universal ribosomal protein uS9 family.

The chain is Small ribosomal subunit protein uS9 from Heliobacterium modesticaldum (strain ATCC 51547 / Ice1).